The primary structure comprises 371 residues: MVSFDRPVWAEIDLSAFRHNMRQIKSLLQPGTIFCPIIKADGYGHGAVPLAHEAVAMGAGYLGVAILDEAAALRAAGITLPILILGYTPPQAAAFVVSNHITQTIFSKEQADALSAAASNLGITVKVHVKVDTGMTRIGVRPEEAAAFCSYVAGLENVHLEGMFTHFASSDSADHAYCLEQFGRFTAAIAAVEASGIRLGIRHCANSAAILSLPEGHLDMVRAGIILYGLKPSDECPMPIDLRPVMRLKARLAMVKQVPPGVGVSYGSIYHTQKESSLATIPIGYADGYTRMLSRKAQVLLRGQRAPVVGRICMDQCMVDVSHVPQAAVGDEVLLFGGPDLPADEIAAHLGTINYEVVCMVGKRVPRVYVE.

Catalysis depends on lysine 39, which acts as the Proton acceptor; specific for D-alanine. Lysine 39 carries the N6-(pyridoxal phosphate)lysine modification. Arginine 137 is a binding site for substrate. The active-site Proton acceptor; specific for L-alanine is tyrosine 266. Methionine 314 provides a ligand contact to substrate.

It belongs to the alanine racemase family. Pyridoxal 5'-phosphate is required as a cofactor.

It carries out the reaction L-alanine = D-alanine. It participates in amino-acid biosynthesis; D-alanine biosynthesis; D-alanine from L-alanine: step 1/1. Its function is as follows. Catalyzes the interconversion of L-alanine and D-alanine. May also act on other amino acids. This Desulfovibrio desulfuricans (strain ATCC 27774 / DSM 6949 / MB) protein is Alanine racemase (alr).